Consider the following 390-residue polypeptide: Phosphopentomutase (390 aa).

Positions 12, 284, 289, 325, 326, and 337 each coordinate Mn(2+).

Belongs to the phosphopentomutase family. Requires Mn(2+) as cofactor.

It localises to the cytoplasm. It catalyses the reaction 2-deoxy-alpha-D-ribose 1-phosphate = 2-deoxy-D-ribose 5-phosphate. The enzyme catalyses alpha-D-ribose 1-phosphate = D-ribose 5-phosphate. It functions in the pathway carbohydrate degradation; 2-deoxy-D-ribose 1-phosphate degradation; D-glyceraldehyde 3-phosphate and acetaldehyde from 2-deoxy-alpha-D-ribose 1-phosphate: step 1/2. Isomerase that catalyzes the conversion of deoxy-ribose 1-phosphate (dRib-1-P) and ribose 1-phosphate (Rib-1-P) to deoxy-ribose 5-phosphate (dRib-5-P) and ribose 5-phosphate (Rib-5-P), respectively. The protein is Phosphopentomutase of Macrococcus caseolyticus (strain JCSC5402) (Macrococcoides caseolyticum).